The primary structure comprises 1292 residues: (E3-independent) E2 ubiquitin-conjugating enzyme (1292 aa).

Pro residues predominate over residues 1–37; it reads MADPAAPTPAAPAPAQAPAPAPEAVPAPAAAPVPAPA. 2 disordered regions span residues 1 to 56 and 85 to 114; these read MADP…EAGS and EDSDSEGEEEGRGSSGCSEAGGAGHEEGRA. The span at 38 to 56 shows a compositional bias: low complexity; sequence PASDSASGPSSDSGPEAGS. Phosphoserine occurs at positions 50, 87, 89, 399, and 401. Disordered regions lie at residues 401 to 459, 472 to 519, and 714 to 746; these read SPDT…AGEQ, RLHS…IPLS, and IEESDYDSVEGSTSGASSDEWEDDSDSWETDNG. Residues 406–427 are compositionally biased toward basic and acidic residues; the sequence is CSRDHSMEDPDKKGESKTKSEA. Phosphoserine is present on serine 441. A compositionally biased stretch (acidic residues) spans 478-490; that stretch reads QDADDEAADDTDD. 2 positions are modified to phosphothreonine: threonine 488 and threonine 491. Residues 491–510 show a composition bias toward low complexity; it reads TSSVTSSASSTTSSQSGSGT. Residues 512–536 carry the Nuclear localization signal motif; the sequence is RKKSIPLSIKNLKRKHKRKKNKITR. At serine 515 the chain carries Phosphoserine. Residues 732–742 are compositionally biased toward acidic residues; that stretch reads DEWEDDSDSWE. Residues 812–882 adopt a coiled-coil conformation; it reads RELKEAIKIL…IVEEEKMEAV (71 aa). Serine 836 bears the Phosphoserine mark. Phosphothreonine is present on threonine 838. Serine 839 carries the phosphoserine modification. Over residues 882-893 the composition is skewed to basic and acidic residues; it reads VPDVERKEDKPE. The disordered stretch occupies residues 882–903; the sequence is VPDVERKEDKPEGQSPVKAEWP. The residue at position 896 (serine 896) is a Phosphoserine. A UBC core domain is found at 953–1113; that stretch reads KFFSTVRKEM…ALIRVVQSMT (161 aa). The Glycyl thioester intermediate role is filled by cysteine 1040. Residues 1160–1248 are disordered; sequence NGVPKASSSP…KSYRSFLPEK (89 aa).

It belongs to the ubiquitin-conjugating enzyme family. In terms of assembly, interacts with CPNE1 (via VWFA domain) and CPNE4 (via VWFA domain). Interacts with UBR2. In terms of processing, phosphorylated. Phosphorylation affects subcellular location. Post-translationally, ubiquitinated: autoubiquitinates, possibly affecting its subcellular location. Predominantly expressed in skeletal muscle and heart.

It localises to the cytoplasm. It is found in the nucleus. The enzyme catalyses S-ubiquitinyl-[E1 ubiquitin-activating enzyme]-L-cysteine + [acceptor protein]-L-lysine = [E1 ubiquitin-activating enzyme]-L-cysteine + N(6)-monoubiquitinyl-[acceptor protein]-L-lysine.. The protein operates within protein modification; protein ubiquitination. With respect to regulation, inhibited by phenylarsine oxide (PAO). Functionally, E2/E3 hybrid ubiquitin-protein ligase that displays both E2 and E3 ligase activities and mediates monoubiquitination of target proteins. Negatively regulates TRAF6-mediated NF-kappa-B activation independently of its E2 activity. Acts as a positive regulator of BMP7 signaling by mediating monoubiquitination of SMAD6, thereby regulating adipogenesis. Mediates monoubiquitination at different sites of the nuclear localization signal (NLS) of BAP1, leading to cytoplasmic retention of BAP1. Also able to monoubiquitinate the NLS of other chromatin-associated proteins, such as INO80 and CXXC1, affecting their subcellular location. Acts as a regulator of retrograde transport by assisting the TRIM27:MAGEL2 E3 ubiquitin ligase complex to mediate 'Lys-63'-linked ubiquitination of WASHC1, leading to promote endosomal F-actin assembly. In Homo sapiens (Human), this protein is (E3-independent) E2 ubiquitin-conjugating enzyme (UBE2O).